The chain runs to 512 residues: Apolipoprotein N-acyltransferase (512 aa).

Transmembrane regions (helical) follow at residues 5 to 25, 56 to 76, 92 to 112, 118 to 138, 168 to 188, and 195 to 215; these read LDKYWQHPALYWPLLILFAAA, FAVSSAYLFGLTAYTTQFYWI, VPLTFLLPAYLALYPALCFWL, LPRGIKIGLVLPILWTLTEFA, FGGIHMVTLATAFLGVWLVLA, and SGKRLLPIILIAALLAAGYTA. One can recognise a CN hydrolase domain in the interval 233-477; the sequence is LQGNIDQTLK…ETVLEGHIKG (245 aa). The Proton acceptor role is filled by E271. K337 is an active-site residue. C389 (nucleophile) is an active-site residue. The chain crosses the membrane as a helical span at residues 487 to 507; the sequence is TGSSWWLMGILTLAALILFIF.

This sequence belongs to the CN hydrolase family. Apolipoprotein N-acyltransferase subfamily.

Its subcellular location is the cell inner membrane. The enzyme catalyses N-terminal S-1,2-diacyl-sn-glyceryl-L-cysteinyl-[lipoprotein] + a glycerophospholipid = N-acyl-S-1,2-diacyl-sn-glyceryl-L-cysteinyl-[lipoprotein] + a 2-acyl-sn-glycero-3-phospholipid + H(+). It participates in protein modification; lipoprotein biosynthesis (N-acyl transfer). In terms of biological role, catalyzes the phospholipid dependent N-acylation of the N-terminal cysteine of apolipoprotein, the last step in lipoprotein maturation. The chain is Apolipoprotein N-acyltransferase from Neisseria meningitidis serogroup A / serotype 4A (strain DSM 15465 / Z2491).